We begin with the raw amino-acid sequence, 369 residues long: MTERVPPRRPATFKLSDPSVVLIDSDDGGGSYTAKPSAKADARPAASAAGAAPPPPPPRARVELAREAEPPISAPKAPKSVINPKKGFRWGTVFWSAATGLVSLAFWLWISKLVEDLFAQSQTLGTIGMVLALLAGGSLAIIIGREAFGLIRLARIEQLHARAARVLETDNSAEARAIIRELLKFEHPNPQLAHGRATLQKHIDDIIDGADLIRLAERELMAQLDLEAKVLISKAAQRVSLVTAISPKALIDVLFVAIAATRLIGQLARLYGGRPGALGMFKLMRQTVSHLAITGGIALSDSVMQSVLGHGLASRLSAKLGEGVVNGMLTARLGLAAMDLTRPLPFDALPRPQLGDLVKDLMKKREKDE.

Residues methionine 1–arginine 61 are disordered. The span at alanine 34–alanine 51 shows a compositional bias: low complexity. Helical transmembrane passes span tryptophan 90–isoleucine 110, leucine 124–glycine 144, and valine 239–alanine 259.

The protein belongs to the UPF0283 family.

It is found in the cell inner membrane. The sequence is that of UPF0283 membrane protein RPA1583 from Rhodopseudomonas palustris (strain ATCC BAA-98 / CGA009).